The primary structure comprises 231 residues: Large ribosomal subunit protein uL1 (231 aa).

It belongs to the universal ribosomal protein uL1 family. Part of the 50S ribosomal subunit.

Its function is as follows. Binds directly to 23S rRNA. The L1 stalk is quite mobile in the ribosome, and is involved in E site tRNA release. In terms of biological role, protein L1 is also a translational repressor protein, it controls the translation of the L11 operon by binding to its mRNA. The sequence is that of Large ribosomal subunit protein uL1 from Stutzerimonas stutzeri (strain A1501) (Pseudomonas stutzeri).